A 569-amino-acid polypeptide reads, in one-letter code: Toxin YxiD (569 aa).

The LXG domain occupies 1-235 (MKTLDVHALH…NPQMKQADDS (235 aa)). A coiled-coil region spans residues 8–91 (ALHEGIQHTI…QHAISSVESN (84 aa)). Residues 548–569 (HQAGIHGTGSPANELFKGGKKK) form a disordered region.

In the N-terminal section; belongs to the LXG family. As to quaternary structure, probably interacts with cognate immunity protein YxxD but not with non-cognate immunity proteins. The interaction inhibits the toxic activity of YxxD.

Its subcellular location is the secreted. Toxic component of one of 6 LXG toxin-immunity modules in this strain. They promote kin selection, mediate competition in biofilms, and drive spatial segregation of different strains, indicating that LXG toxins may help avoid warfare between strains in biofilms. Mediates intercellular competition during biofilm formation; disruption of the operon disadvantages the bacteria, but overexpression of the cognate immunity protein restores growth in competition with wild-type. Overexpression alone in situ causes growth arrest but not cell lysis, a large decrease in chromosomal DNA content and the production of anucleate cells. No effect is seen on rRNA. Co-overexpression with cognate immunity protein YxxD does not cause growth arrest. The toxic effect is not dependent on the epsA and tapA operons which are required for biofilm formation. This is Toxin YxiD (yxiD) from Bacillus subtilis (strain 168).